The sequence spans 245 residues: Cuticle protein (245 aa).

Residues 25-86 enclose the Chitin-binding type R&amp;R domain; the sequence is VSYAAAPALV…TGDSKSQQES (62 aa). A disordered region spans residues 79-100; that stretch reads DSKSQQESRSGDVVQGSYSVVD. 3 repeat units span residues 92–95, 108–111, and 118–121.

Functionally, component of the cuticle of African malaria mosquito. This Anopheles gambiae (African malaria mosquito) protein is Cuticle protein (Ccp84Ab).